Here is a 302-residue protein sequence, read N- to C-terminus: Bacteriochlorophyll synthase 33 kDa chain (302 aa).

The next 9 membrane-spanning stretches (helical) occupy residues 25–45, 49–69, 97–117, 119–139, 145–165, 166–186, 223–243, 246–266, and 275–295; these read ITWF…GIWP, WPLV…MSQA, WGLY…WMLG, WGFG…VEPI, GWWG…FTGA, AVLS…LYAF, LACT…VIWG, IHAG…RVLL, and WYNG…AFAI.

The protein resides in the cell membrane. Its pathway is porphyrin-containing compound metabolism; bacteriochlorophyll biosynthesis (light-independent). Catalyzes the esterification of bacteriochlorophyllide a by geranylgeraniol-PPi. The chain is Bacteriochlorophyll synthase 33 kDa chain (bchG) from Cereibacter sphaeroides (strain ATCC 17023 / DSM 158 / JCM 6121 / CCUG 31486 / LMG 2827 / NBRC 12203 / NCIMB 8253 / ATH 2.4.1.) (Rhodobacter sphaeroides).